The chain runs to 921 residues: uncharacterized protein (921 aa).

Residues 334 to 628 are kinase-like; it reads MTKRKFLSID…NLKSIYYDFF (295 aa). Residues 401 to 494 are compositionally biased toward low complexity; sequence GSSEWSFGSS…NNNNSDGSSG (94 aa). 2 disordered regions span residues 401-499 and 664-711; these read GSSE…DNRN and NLYS…NSNS.

This is an uncharacterized protein from Dictyostelium discoideum (Social amoeba).